The chain runs to 359 residues: MALNSSADDGIKRIQDDCPKAGRHSYIFVMIPTLYSIIFVVGIFGNSLVVIVIYFYMKLKTVASVFLLNLALADLCFLLTLPVWAVYTAMEYRWPFGNHLCKIASAGISFNLYASVFLLTCLSIDRYLAIVHPMKSRLRRTMLVAKVTCVVIWLLAGLASLPAVIHRNVYFIENTNSTVCAFHYESQNSTLPVGLGLTKNILGFMFPFLIILTSYTLIWKALKKAYEIQKNKPRNDDIFRIIMAIVLFFFFSWIPHQIFTFLDVLIQLGVIRDCKIADVVDTAMPITICIAYFNNCLNPLFYGFLGKKFKKYFLQLLKYIPPKAKSHSSLSTKMSTLSYRPSDNMNSSAKKPASCFEVE.

Residues 1–25 (MALNSSADDGIKRIQDDCPKAGRHS) lie on the Extracellular side of the membrane. The N-linked (GlcNAc...) asparagine glycan is linked to Asn4. Angiotensin II-binding residues include Gln15 and Asp17. 2 cysteine pairs are disulfide-bonded: Cys18/Cys274 and Cys101/Cys180. A helical membrane pass occupies residues 26–55 (YIFVMIPTLYSIIFVVGIFGNSLVVIVIYF). Residues 56 to 61 (YMKLKT) lie on the Cytoplasmic side of the membrane. The chain crosses the membrane as a helical span at residues 62–89 (VASVFLLNLALADLCFLLTLPVWAVYTA). At 90 to 98 (MEYRWPFGN) the chain is on the extracellular side. The helical transmembrane segment at 99–125 (HLCKIASAGISFNLYASVFLLTCLSID) threads the bilayer. At 126 to 141 (RYLAIVHPMKSRLRRT) the chain is on the cytoplasmic side. Residues 142–165 (MLVAKVTCVVIWLLAGLASLPAVI) traverse the membrane as a helical segment. The Extracellular segment spans residues 166–190 (HRNVYFIENTNSTVCAFHYESQNST). Arg167 serves as a coordination point for angiotensin II. An N-linked (GlcNAc...) asparagine glycan is attached at Asn176. Angiotensin II contacts are provided by Phe182, His183, and Tyr184. A glycan (N-linked (GlcNAc...) asparagine) is linked at Asn188. The helical transmembrane segment at 191–216 (LPVGLGLTKNILGFMFPFLIILTSYT) threads the bilayer. Residue Lys199 participates in angiotensin II binding. Topologically, residues 217–239 (LIWKALKKAYEIQKNKPRNDDIF) are cytoplasmic. The chain crosses the membrane as a helical span at residues 240-268 (RIIMAIVLFFFFSWIPHQIFTFLDVLIQL). Residues 269-278 (GVIRDCKIAD) are Extracellular-facing. A helical transmembrane segment spans residues 279-304 (VVDTAMPITICIAYFNNCLNPLFYGF). The Cytoplasmic segment spans residues 305-359 (LGKKFKKYFLQLLKYIPPKAKSHSSLSTKMSTLSYRPSDNMNSSAKKPASCFEVE). Residue Cys355 is the site of S-palmitoyl cysteine attachment.

The protein belongs to the G-protein coupled receptor 1 family. As to quaternary structure, interacts with MAS1. Interacts with ARRB1. Interacts with FLNA (via filamin repeat 21); increases PKA-mediated phosphorylation of FLNA. C-terminal Ser or Thr residues may be phosphorylated.

The protein localises to the cell membrane. In terms of biological role, receptor for angiotensin II, a vasoconstricting peptide, which acts as a key regulator of blood pressure and sodium retention by the kidney. The activated receptor in turn couples to G-alpha proteins G(q) (GNAQ, GNA11, GNA14 or GNA15) and thus activates phospholipase C and increases the cytosolic Ca(2+) concentrations, which in turn triggers cellular responses such as stimulation of protein kinase C. The sequence is that of Type-1 angiotensin II receptor (AGTR1) from Meriones unguiculatus (Mongolian jird).